Reading from the N-terminus, the 495-residue chain is Ubiquinone biosynthesis monooxygenase COQ6, mitochondrial (495 aa).

It belongs to the UbiH/COQ6 family. In terms of assembly, component of a multi-subunit COQ enzyme complex. FAD is required as a cofactor.

The protein resides in the mitochondrion inner membrane. It carries out the reaction a 4-hydroxy-3-(all-trans-polyprenyl)benzoate + 2 reduced [2Fe-2S]-[ferredoxin] + O2 + 2 H(+) = a 3,4-dihydroxy-5-(all-trans-polyprenyl)benzoate + 2 oxidized [2Fe-2S]-[ferredoxin] + H2O. The enzyme catalyses a 2-methoxy-6-(all-trans-polyprenyl)phenol + 2 reduced [2Fe-2S]-[ferredoxin] + O2 + 2 H(+) = a 2-methoxy-6-(all-trans-polyprenyl)benzene-1,4-diol + 2 oxidized [2Fe-2S]-[ferredoxin] + H2O. The protein operates within cofactor biosynthesis; ubiquinone biosynthesis. Functionally, FAD-dependent monooxygenase required for two non-consecutive steps during ubiquinone biosynthesis. Required for the C5-ring hydroxylation during ubiquinone biosynthesis by catalyzing the hydroxylation of 4-hydroxy-3-(all-trans-polyprenyl)benzoic acid to 3,4-dihydroxy-5-(all-trans-polyprenyl)benzoic acid. Also acts downstream of coq4, for the C1-hydroxylation during ubiquinone biosynthesis by catalyzing the hydroxylation of 2-methoxy-6-(all-trans-polyprenyl)phenol to 2-methoxy-6-(all-trans-polyprenyl)benzene-1,4-diol. The electrons required for the hydroxylation reaction are funneled indirectly to coq6 from NADPH via a ferredoxin/ferredoxin reductase system. The polypeptide is Ubiquinone biosynthesis monooxygenase COQ6, mitochondrial (Dictyostelium discoideum (Social amoeba)).